A 162-amino-acid chain; its full sequence is Phosphopantetheine adenylyltransferase (162 aa).

T9 provides a ligand contact to substrate. Residues 9–10 (TF) and H17 contribute to the ATP site. Residues K41, L73, and R87 each contribute to the substrate site. ATP contacts are provided by residues 88-90 (GLR), E98, and 123-129 (FAFLSST).

The protein belongs to the bacterial CoaD family. As to quaternary structure, homohexamer. The cofactor is Mg(2+).

It localises to the cytoplasm. It carries out the reaction (R)-4'-phosphopantetheine + ATP + H(+) = 3'-dephospho-CoA + diphosphate. It participates in cofactor biosynthesis; coenzyme A biosynthesis; CoA from (R)-pantothenate: step 4/5. Its function is as follows. Reversibly transfers an adenylyl group from ATP to 4'-phosphopantetheine, yielding dephospho-CoA (dPCoA) and pyrophosphate. In Vibrio atlanticus (strain LGP32) (Vibrio splendidus (strain Mel32)), this protein is Phosphopantetheine adenylyltransferase.